A 393-amino-acid polypeptide reads, in one-letter code: Translation initiation factor eIF2B subunit beta (393 aa).

The segment at 105-125 (VSSSNSSSPSQKRDIPSNEKL) is disordered. Phosphoserine is present on residues S106, S108, and S112.

It belongs to the eIF-2B alpha/beta/delta subunits family. As to quaternary structure, component of the translation initiation factor 2B (eIF2B) complex which is a heterodecamer of two sets of five different subunits: alpha, beta, gamma, delta and epsilon. Subunits alpha, beta and delta comprise a regulatory subcomplex and subunits epsilon and gamma comprise a catalytic subcomplex. Within the complex, the hexameric regulatory complex resides at the center, with the two heterodimeric catalytic subcomplexes bound on opposite sides.

The protein localises to the cytoplasm. Its subcellular location is the cytosol. In terms of biological role, acts as a component of the translation initiation factor 2B (eIF2B) complex, which catalyzes the exchange of GDP for GTP on the eukaryotic initiation factor 2 (eIF2) complex gamma subunit. Its guanine nucleotide exchange factor activity is repressed when bound to eIF2 complex phosphorylated on the alpha subunit, thereby limiting the amount of methionyl-initiator methionine tRNA available to the ribosome and consequently global translation is repressed. The sequence is that of Translation initiation factor eIF2B subunit beta (tif222) from Schizosaccharomyces pombe (strain 972 / ATCC 24843) (Fission yeast).